The sequence spans 629 residues: Dapper homolog 3 (629 aa).

Ser6 bears the Phosphoserine mark. Disordered stretches follow at residues 50 to 76 (PGMG…RRAA) and 105 to 574 (GGLE…GGLV). A compositionally biased stretch (acidic residues) spans 56-69 (EAEDEEDADEDEDA). Residues 63 to 87 (ADEDEDAAAARRAAAALEEQLEALP) adopt a coiled-coil conformation. Low complexity predominate over residues 105–150 (GGLEQESGRSSGFYEDPSSTGGPDSPPSTFCGDSGFSGSSSYGRLG). Ser165 and Ser239 each carry phosphoserine. Arg258 carries the omega-N-methylarginine modification. Positions 301–311 (PAREPSLERVG) are enriched in basic and acidic residues. Low complexity predominate over residues 316-335 (SPAALSRAWASSWESEAAPE). A compositionally biased stretch (pro residues) spans 336–348 (PAAPPAAPSPPDS). 2 positions are modified to phosphoserine: Ser426 and Ser478. Residues 525–535 (SAGRLGPLGRR) show a composition bias toward low complexity. Residues 536–546 (GPAGGVGGGYG) show a composition bias toward gly residues. Positions 547–568 (ESESSASEGESPAFSSASSDSD) are enriched in low complexity. The PDZ-binding motif lies at 626-629 (MTTV).

It belongs to the dapper family. In terms of assembly, can form homodimers and heterodimers with DACT1 or DACT3. Interacts with CSNK1D, PKA catalytic subunit, PKC-type kinase, DVL1, DVL3, VANGL1, VANGL2 and CTNND1. Interacts with DVL2.

Functionally, may be involved in regulation of intracellular signaling pathways during development. Specifically thought to play a role in canonical and/or non-canonical Wnt signaling pathways through interaction with DSH (Dishevelled) family proteins. The protein is Dapper homolog 3 (DACT3) of Homo sapiens (Human).